Reading from the N-terminus, the 320-residue chain is Homoserine kinase (320 aa).

100–110 (PLSSGMGSSAA) lines the ATP pocket.

It belongs to the GHMP kinase family. Homoserine kinase subfamily.

Its subcellular location is the cytoplasm. It catalyses the reaction L-homoserine + ATP = O-phospho-L-homoserine + ADP + H(+). The protein operates within amino-acid biosynthesis; L-threonine biosynthesis; L-threonine from L-aspartate: step 4/5. Its function is as follows. Catalyzes the ATP-dependent phosphorylation of L-homoserine to L-homoserine phosphate. This is Homoserine kinase from Chlorobium phaeobacteroides (strain BS1).